An 840-amino-acid polypeptide reads, in one-letter code: Subtilisin-like protease SBT2.3 (840 aa).

A signal peptide spans 1-27; it reads MVRVMLVRFGFLLLMISFVFLSNNTLG. A propeptide spans 28 to 146 (activation peptide); that stretch reads QQQDDDDDSA…IVLDYSVRTA (119 aa). The region spanning 38–146 is the Inhibitor I9 domain; sequence VYIVTLKQPP…IVLDYSVRTA (109 aa). Basic residues predominate over residues 61–81; it reads KSKFTPKLRPRNNSRKRHGKS. The segment at 61–85 is disordered; it reads KSKFTPKLRPRNNSRKRHGKSKIPS. The N-linked (GlcNAc...) asparagine glycan is linked to Asn72. Residues 148-694 enclose the Peptidase S8 domain; the sequence is TYTPQFMGLP…SGFVNATAAL (547 aa). Asp180 (charge relay system) is an active-site residue. N-linked (GlcNAc...) asparagine glycans are attached at residues Asn193 and Asn241. His255 acts as the Charge relay system in catalysis. Residues Asn398, Asn427, Asn480, Asn525, and Asn553 are each glycosylated (N-linked (GlcNAc...) asparagine). A PA domain is found at 418 to 513; sequence MISAFHALNN…MDMPGIIIPS (96 aa). Ser619 serves as the catalytic Charge relay system. N-linked (GlcNAc...) asparagine glycosylation is found at Asn689, Asn715, Asn723, Asn767, and Asn808.

The protein belongs to the peptidase S8 family.

It localises to the secreted. In Arabidopsis thaliana (Mouse-ear cress), this protein is Subtilisin-like protease SBT2.3.